Here is a 1164-residue protein sequence, read N- to C-terminus: IgA FC receptor (1164 aa).

The signal sequence occupies residues 1–37; that stretch reads MFKSNYERKMRYSIRKFSVGVASVAVASLFMGSVAHA. Disordered stretches follow at residues 54–75 and 167–220; these read KPYPSMAQTDQGNNSSSSELET and HEEV…EDKD. Residues 59 to 73 are compositionally biased toward polar residues; that stretch reads MAQTDQGNNSSSSEL. Composition is skewed to basic and acidic residues over residues 167–176 and 183–220; these read HEEVEKDKKA and KQSDTKVDLSNIDKELNHQKSQVEKMAEQKGITNEDKD. IgA-binding regions lie at residues 199–438 and 439–826; these read NHQK…KIEL and TVSP…ETNT. Residues 434–534 form the Ig-like domain; that stretch reads QKIELTVSPE…VEKTFTITVQ (101 aa). A compositionally biased stretch (basic and acidic residues) spans 536–564; the sequence is KEEKQVPKTPEQKDSKTEEKVPQEPKSND. Disordered regions lie at residues 536–567 and 823–947; these read KEEKQVPKTPEQKDSKTEEKVPQEPKSNDKNQ and ETNT…PDGL. Residues 911 to 920 show a composition bias toward pro residues; the sequence is PKIPEPPKTP. The short motif at 1132-1136 is the LPXTG sorting signal element; that stretch reads LPYTG. Thr-1135 carries the pentaglycyl murein peptidoglycan amidated threonine modification. Residues 1136-1164 constitute a propeptide, removed by sortase; it reads GVASNLVLEIMGLLGLIGTSFIAMKRRKS.

It localises to the secreted. It is found in the cell wall. The sequence is that of IgA FC receptor (bag) from Streptococcus agalactiae.